The following is a 199-amino-acid chain: dTTP/UTP pyrophosphatase (199 aa).

D75 functions as the Proton acceptor in the catalytic mechanism.

Belongs to the Maf family. YhdE subfamily. It depends on a divalent metal cation as a cofactor.

The protein resides in the cytoplasm. It catalyses the reaction dTTP + H2O = dTMP + diphosphate + H(+). The enzyme catalyses UTP + H2O = UMP + diphosphate + H(+). Functionally, nucleoside triphosphate pyrophosphatase that hydrolyzes dTTP and UTP. May have a dual role in cell division arrest and in preventing the incorporation of modified nucleotides into cellular nucleic acids. The protein is dTTP/UTP pyrophosphatase of Methylobacillus flagellatus (strain ATCC 51484 / DSM 6875 / VKM B-1610 / KT).